The chain runs to 340 residues: MSSTQEASVTDLPVKRPREAEEDNNGGAMETENGGGEIKEPSCMSSIIPGWFSEISPMWPGEAHSLKVEKILFQGKSDYQDVIVFQSATYGKVLVLDGVIQLTERDECAYQEMITHLPLCSISNPKKVLVIGGGDGGVLREVARHSSVEQIDICEIDKMVVDVAKQYFPNVAVGYEDPRVNLIIGDGVAFLKNAAEGTYDAVIVDSSDPIGPAKELFEKPFFESVNRALRPGGVVCTQAESLWLHMDIIEDIVSNCRDIFKGSVNYAWTSVPTYPSGVIGFMLCSSEGPQVDFKKPVSLIDTDESSIKSHCPLKYYNAEIHSAAFCLPSFAKKVIDSKAN.

The disordered stretch occupies residues 1–41 (MSSTQEASVTDLPVKRPREAEEDNNGGAMETENGGGEIKEP). S2 bears the N-acetylserine mark. Positions 49-286 (PGWFSEISPM…GVIGFMLCSS (238 aa)) constitute a PABS domain. Q80 contacts S-adenosyl 3-(methylsulfanyl)propylamine. Y110 is a binding site for putrescine. Residues Q111, D135, E155, 186–187 (DG), and D205 contribute to the S-adenosyl 3-(methylsulfanyl)propylamine site. D205 serves as the catalytic Proton acceptor. Putrescine is bound by residues 205–208 (DSSD) and Y274.

It belongs to the spermidine/spermine synthase family. As to quaternary structure, heterodimer. Component of a multiprotein complex. Interacts with SPMS and SPDSYN1.

It catalyses the reaction S-adenosyl 3-(methylsulfanyl)propylamine + putrescine = S-methyl-5'-thioadenosine + spermidine + H(+). It functions in the pathway amine and polyamine biosynthesis; spermidine biosynthesis; spermidine from putrescine: step 1/1. The chain is Spermidine synthase 2 (SPDSYN2) from Arabidopsis thaliana (Mouse-ear cress).